The chain runs to 493 residues: Glutamyl-tRNA(Gln) amidotransferase subunit A (493 aa).

Residues Lys-79 and Ser-159 each act as charge relay system in the active site. Ser-183 functions as the Acyl-ester intermediate in the catalytic mechanism.

It belongs to the amidase family. GatA subfamily. Heterotrimer of A, B and C subunits.

The catalysed reaction is L-glutamyl-tRNA(Gln) + L-glutamine + ATP + H2O = L-glutaminyl-tRNA(Gln) + L-glutamate + ADP + phosphate + H(+). In terms of biological role, allows the formation of correctly charged Gln-tRNA(Gln) through the transamidation of misacylated Glu-tRNA(Gln) in organisms which lack glutaminyl-tRNA synthetase. The reaction takes place in the presence of glutamine and ATP through an activated gamma-phospho-Glu-tRNA(Gln). This is Glutamyl-tRNA(Gln) amidotransferase subunit A from Brucella anthropi (strain ATCC 49188 / DSM 6882 / CCUG 24695 / JCM 21032 / LMG 3331 / NBRC 15819 / NCTC 12168 / Alc 37) (Ochrobactrum anthropi).